Reading from the N-terminus, the 294-residue chain is tRNA pseudouridine synthase B (294 aa).

D39 (nucleophile) is an active-site residue.

Belongs to the pseudouridine synthase TruB family. Type 1 subfamily.

The catalysed reaction is uridine(55) in tRNA = pseudouridine(55) in tRNA. Its function is as follows. Responsible for synthesis of pseudouridine from uracil-55 in the psi GC loop of transfer RNAs. The polypeptide is tRNA pseudouridine synthase B (Streptococcus pyogenes serotype M3 (strain ATCC BAA-595 / MGAS315)).